A 91-amino-acid chain; its full sequence is uncharacterized protein (91 aa).

The protein belongs to the FrmR/RcnR family.

The protein resides in the cytoplasm. This is an uncharacterized protein from Serratia marcescens.